The primary structure comprises 351 residues: Dihydroorotate dehydrogenase (quinone) (351 aa).

Residues 61 to 65 (AGLDK) and Thr-85 contribute to the FMN site. Lys-65 provides a ligand contact to substrate. Position 110 to 114 (110 to 114 (NRMGF)) interacts with substrate. Residues Asn-139 and Asn-172 each coordinate FMN. Asn-172 lines the substrate pocket. Ser-175 functions as the Nucleophile in the catalytic mechanism. Asn-177 provides a ligand contact to substrate. 2 residues coordinate FMN: Lys-217 and Thr-245. A substrate-binding site is contributed by 246–247 (NT). FMN is bound by residues Gly-268, Gly-297, and 318–319 (YS).

It belongs to the dihydroorotate dehydrogenase family. Type 2 subfamily. Monomer. FMN serves as cofactor.

The protein localises to the cell membrane. It carries out the reaction (S)-dihydroorotate + a quinone = orotate + a quinol. It participates in pyrimidine metabolism; UMP biosynthesis via de novo pathway; orotate from (S)-dihydroorotate (quinone route): step 1/1. Its function is as follows. Catalyzes the conversion of dihydroorotate to orotate with quinone as electron acceptor. The chain is Dihydroorotate dehydrogenase (quinone) from Stenotrophomonas maltophilia (strain K279a).